A 206-amino-acid chain; its full sequence is RNA-binding protein with multiple splicing 2 (206 aa).

Residue serine 2 is modified to N-acetylserine. The RRM domain maps to 25–102 (RTLFVSGLPV…QTLRLEFAKA (78 aa)). The tract at residues 35-45 (DIKPRELYLLF) is important for homodimerization.

As to quaternary structure, homodimer. Interacts with EEF2.

The protein resides in the cytoplasm. Its subcellular location is the nucleus. The protein localises to the stress granule. Its function is as follows. RNA-binding protein involved in the regulation of smooth muscle cell differentiation and proliferation in the gastrointestinal system. Binds NOG mRNA, the major inhibitor of the bone morphogenetic protein (BMP) pathway. Mediates an increase of NOG mRNA levels, thereby contributing to the negative regulation of BMP signaling pathway and promoting reversible dedifferentiation and proliferation of smooth muscle cells. Acts as a pre-mRNA alternative splicing regulator. Mediates ACTN1 and FLNB alternative splicing. Likely binds to mRNA tandem CAC trinucleotide or CA dinucleotide motifs. The chain is RNA-binding protein with multiple splicing 2 (Rbpms2) from Mus musculus (Mouse).